The sequence spans 89 residues: Small ribosomal subunit protein uS15 (89 aa).

The span at 1-11 (MSITAERKAEV) shows a compositional bias: basic and acidic residues. The interval 1 to 24 (MSITAERKAEVIKTSATKAGDTGS) is disordered.

Belongs to the universal ribosomal protein uS15 family. Part of the 30S ribosomal subunit. Forms a bridge to the 50S subunit in the 70S ribosome, contacting the 23S rRNA.

In terms of biological role, one of the primary rRNA binding proteins, it binds directly to 16S rRNA where it helps nucleate assembly of the platform of the 30S subunit by binding and bridging several RNA helices of the 16S rRNA. Functionally, forms an intersubunit bridge (bridge B4) with the 23S rRNA of the 50S subunit in the ribosome. This is Small ribosomal subunit protein uS15 from Rhodopseudomonas palustris (strain TIE-1).